Here is a 384-residue protein sequence, read N- to C-terminus: Urotensin-2 receptor (384 aa).

Residues 1 to 54 lie on the Extracellular side of the membrane; the sequence is MALSPEPSSRFLVPATMGSAMPELPGAPNASLNSSLASPTEPNSLEDLVATGTI. 2 N-linked (GlcNAc...) asparagine glycosylation sites follow: asparagine 29 and asparagine 33. The chain crosses the membrane as a helical span at residues 55–77; it reads GVVLSAMGVVGMAGNVYTLTVMC. The Cytoplasmic segment spans residues 78 to 87; that stretch reads RFLHTSASMY. Residues 88–113 form a helical membrane-spanning segment; sequence VYVINLALADLLYLLSIPFIVATYVT. At 114–124 the chain is on the extracellular side; that stretch reads KRWHFGDVGCR. The cysteines at positions 123 and 199 are disulfide-linked. Residues 125-146 form a helical membrane-spanning segment; it reads VLFSLDFLTMHASIFTLTLMSR. Topologically, residues 147–167 are cytoplasmic; the sequence is ERYAAVVRPLDTVQRSKGYRK. A helical transmembrane segment spans residues 168–186; it reads VLALGTWLLALLLALPMML. Topologically, residues 187–209 are extracellular; it reads AIRLVRRGHKSLCLPAWGQRTHR. The chain crosses the membrane as a helical span at residues 210-232; that stretch reads AYLTLLFGTSIVGPGVVIGLLYV. The Cytoplasmic segment spans residues 233-259; sequence RLARAYWLSQRSSFTQTRRLPNPRVLY. The helical transmembrane segment at 260–285 threads the bilayer; that stretch reads LILGIVLLFWACFLPFWLWQLLAQYR. Topologically, residues 286-299 are extracellular; the sequence is GAPPLAPRSARIVN. A helical membrane pass occupies residues 300-320; it reads YLTTCLTYGNSCVNPFLYTLL. Topologically, residues 321-384 are cytoplasmic; that stretch reads TKNYRDYRQR…SQAVPGSLCV (64 aa).

This sequence belongs to the G-protein coupled receptor 1 family. In terms of tissue distribution, expressed in neural tissue, including sensory epithelia.

Its subcellular location is the cell membrane. Its function is as follows. High affinity receptor for urotensin-2 and urotensin-2B. The activity of this receptor is mediated by a G-protein that activate a phosphatidylinositol-calcium second messenger system. This Bos taurus (Bovine) protein is Urotensin-2 receptor (UTS2R).